A 195-amino-acid chain; its full sequence is U8 snoRNA-decapping enzyme (195 aa).

In terms of domain architecture, Nudix hydrolase spans 18–168 (GWRHACHALL…LENTFIGNAR (151 aa)). 3 residues coordinate substrate: H24, R50, and F57. 4 residues coordinate Mn(2+): G59, E76, E80, and H99. The Nudix box motif lies at 61-82 (FVDLRDGSLEDGLNRELGEELG). 2 residues coordinate substrate: N166 and Q170. E173 provides a ligand contact to Mn(2+).

It belongs to the Nudix hydrolase family. NUDT16 subfamily. As to quaternary structure, homodimer. The cofactor is Mg(2+). Requires Mn(2+) as cofactor. It depends on Co(2+) as a cofactor.

It is found in the nucleus. Its subcellular location is the nucleolus. The protein localises to the nucleoplasm. It localises to the cytoplasm. The catalysed reaction is a 5'-end (N(7)-methyl 5'-triphosphoguanosine)-ribonucleoside in mRNA + H2O = N(7)-methyl-GDP + a 5'-end phospho-ribonucleoside in mRNA + 2 H(+). It catalyses the reaction IDP + H2O = IMP + phosphate + H(+). It carries out the reaction dIDP + H2O = dIMP + phosphate + H(+). The enzyme catalyses a 5'-end NAD(+)-phospho-ribonucleoside in mRNA + H2O = a 5'-end phospho-ribonucleoside in mRNA + NAD(+) + H(+). The catalysed reaction is a 5'-end FAD-phospho-ribonucleoside in mRNA + H2O = a 5'-end phospho-adenosine-phospho-ribonucleoside in mRNA + FMN + 2 H(+). It catalyses the reaction a 5'-end CoA-ribonucleoside in mRNA + H2O = a 5'-end phospho-adenosine-phospho-ribonucleoside in mRNA + (R)-4'-phosphopantetheine + 2 H(+). Functionally, RNA-binding and decapping enzyme that catalyzes the cleavage of the cap structure of snoRNAs and mRNAs in a metal-dependent manner. Part of the U8 snoRNP complex that is required for the accumulation of mature 5.8S and 28S rRNA. Has diphosphatase activity and removes m7G and/or m227G caps from U8 snoRNA and leaves a 5'monophosphate on the RNA. Also catalyzes the cleavage of the cap structure on mRNAs. Does not hydrolyze cap analog structures like 7-methylguanosine nucleoside triphosphate (m7GpppG). Also hydrolysis m7G- and m227G U3-capped RNAs but with less efficiencies. Has broad substrate specificity with manganese or cobalt as cofactor and can act on various RNA species. Binds to the U8 snoRNA; metal is not required for RNA-binding. May play a role in the regulation of snoRNAs and mRNAs degradation. Also acts as a phosphatase; hydrolyzes the non-canonical purine nucleotides inosine diphosphate (IDP) and deoxyinosine diphosphate (dITP) as well as guanosine diphosphate (GDP), deoxyguanosine diphosphate (dGDP), xanthine diphosphate (XDP), inosine triphosphate (ITP) and deoxyinosine triphosphate (ITP) to their respective monophosphate derivatives and does not distinguish between the deoxy- and ribose forms. The order of activity with different substrates is IDP &gt; dIDP &gt;&gt; GDP = dGDP &gt; XDP = ITP = dITP. Binds strongly to GTP, ITP and XTP. Participates in the hydrolysis of dIDP/IDP and probably excludes non-canonical purines from RNA and DNA precursor pools, thus preventing their incorporation into RNA and DNA and avoiding chromosomal lesions. Exhibits decapping activity towards NAD-capped RNAs and FAD-capped RNAs. Exhibits decapping activity towards dpCoA-capped RNAs in vitro. This chain is U8 snoRNA-decapping enzyme (NUDT16), found in Bos taurus (Bovine).